A 367-amino-acid chain; its full sequence is Germination protease (367 aa).

Positions 1 to 15 (MKEPLDLSKYSIRTD) are excised as a propeptide.

It belongs to the peptidase A25 family. Homotetramer. Autoproteolytically processed. The inactive tetrameric zymogen termed p46 autoprocesses to a smaller form termed p41, which is active only during spore germination.

The enzyme catalyses Endopeptidase action with P4 Glu or Asp, P1 preferably Glu &gt; Asp, P1' hydrophobic and P2' Ala.. Its function is as follows. Initiates the rapid degradation of small, acid-soluble proteins during spore germination. This chain is Germination protease, found in Bacillus cereus (strain B4264).